We begin with the raw amino-acid sequence, 484 residues long: Calcium-dependent protein kinase 26 (484 aa).

A Protein kinase domain is found at 24 to 282 (YSLGHKLGQG…AHQVLRHPWI (259 aa)). ATP-binding positions include 30–38 (LGQGQFGTT) and K53. Catalysis depends on D148, which acts as the Proton acceptor. S188 is modified (phosphoserine). The segment at 288 to 318 (APDRALDPAVLSRLKQFSAMNKLKQMALRVI) is autoinhibitory domain. 4 consecutive EF-hand domains span residues 325–360 (EEIA…YGST), 361–396 (LKDT…LNKL), 397–432 (EREE…QGMS), and 436–466 (LEDV…GIVG). D338, D340, S342, E349, D374, D376, S378, T380, E385, D410, D412, S414, Y416, E421, D444, D446, D448, R450, and E455 together coordinate Ca(2+).

This sequence belongs to the protein kinase superfamily. Ser/Thr protein kinase family. CDPK subfamily.

It catalyses the reaction L-seryl-[protein] + ATP = O-phospho-L-seryl-[protein] + ADP + H(+). It carries out the reaction L-threonyl-[protein] + ATP = O-phospho-L-threonyl-[protein] + ADP + H(+). Activated by calcium. Autophosphorylation may play an important role in the regulation of the kinase activity. Functionally, may play a role in signal transduction pathways that involve calcium as a second messenger. This chain is Calcium-dependent protein kinase 26 (CPK26), found in Arabidopsis thaliana (Mouse-ear cress).